The sequence spans 322 residues: Polyisoprenyl-teichoic acid--peptidoglycan teichoic acid transferase TagT (322 aa).

The Cytoplasmic portion of the chain corresponds to 1-19 (MEERSQRRKKKRKLKKWVK). The helical; Signal-anchor for type II membrane protein transmembrane segment at 20 to 40 (VVAGLMAFLVIAAGSVGAYAF) threads the bilayer. Topologically, residues 41–322 (VKLNNASKEA…KKELQNDLGV (282 aa)) are extracellular.

The protein belongs to the LytR/CpsA/Psr (LCP) family. As to quaternary structure, interacts with MreB.

The protein resides in the cell membrane. It participates in cell wall biogenesis. Its function is as follows. May catalyze the final step in cell wall teichoic acid biosynthesis, the transfer of the anionic cell wall polymers (APs) from their lipid-linked precursor to the cell wall peptidoglycan (PG). This chain is Polyisoprenyl-teichoic acid--peptidoglycan teichoic acid transferase TagT, found in Bacillus subtilis (strain 168).